Here is a 268-residue protein sequence, read N- to C-terminus: Undecaprenyl-diphosphatase (268 aa).

The next 7 helical transmembrane spans lie at 41-61, 89-109, 114-134, 155-175, 191-211, 218-238, and 248-268; these read PGPS…VCYF, IFIG…FVPY, IFRS…LMYI, LIGL…GVTI, FSFL…FISS, FSFF…LLAI, and NGLK…LLNL.

The protein belongs to the UppP family.

It localises to the cell inner membrane. It carries out the reaction di-trans,octa-cis-undecaprenyl diphosphate + H2O = di-trans,octa-cis-undecaprenyl phosphate + phosphate + H(+). Functionally, catalyzes the dephosphorylation of undecaprenyl diphosphate (UPP). Confers resistance to bacitracin. The chain is Undecaprenyl-diphosphatase from Prochlorococcus marinus (strain MIT 9312).